A 321-amino-acid polypeptide reads, in one-letter code: Gap junction delta-2 protein (321 aa).

Topologically, residues 1 to 19 (MGEWTILERLLEAAVQQHS) are cytoplasmic. A helical transmembrane segment spans residues 20–42 (TMIGRILLTVVVIFRILIVAIVG). Over 43-75 (ETVYDDEQTMFVCNTLQPGCNQACYDRAFPISH) the chain is Extracellular. Residues 76–98 (IRYWVFQIIMVCTPSLCFITYSV) form a helical membrane-spanning segment. The Cytoplasmic segment spans residues 99-197 (HQSAKQRERR…KLRRQEGISR (99 aa)). The tract at residues 120–141 (PAESIGGPGGTGGGGSGGSKRE) is disordered. The span at 125–137 (GGPGGTGGGGSGG) shows a compositional bias: gly residues. The helical transmembrane segment at 198 to 220 (FYIIQVVFRNALEIGFLVGQYFL) threads the bilayer. Residues 221 to 252 (YGFSVPGLYECNRYPCIKEVECYVSRPTEKTV) are Extracellular-facing. A helical membrane pass occupies residues 253 to 275 (FLVFMFAVSGICVVLNLAELNHL). Residues 276-321 (GWRKIKLAVRGAQAKRKSVYEIRNKDLPRVSVPNFGRTQSSDSAYV) are Cytoplasmic-facing.

This sequence belongs to the connexin family. Delta-type subfamily. In terms of assembly, a connexon is composed of a hexamer of connexins. Highly expressed in neurons.

It is found in the cell membrane. It localises to the cell junction. Its subcellular location is the gap junction. Functionally, one gap junction consists of a cluster of closely packed pairs of transmembrane channels, the connexons, through which materials of low MW diffuse from one cell to a neighboring cell. The sequence is that of Gap junction delta-2 protein (Gjd2) from Mus musculus (Mouse).